Here is a 446-residue protein sequence, read N- to C-terminus: Divalent metal cation transporter MntH (446 aa).

The next 11 helical transmembrane spans lie at 32-52, 59-79, 107-127, 139-159, 168-188, 205-225, 264-284, 303-323, 355-375, 381-401, and 420-440; these read LAFL…GNWI, AQFG…AMLL, AIIF…AEVI, IPLI…LFIM, AIVG…VYIS, IIAN…TIMP, SIAF…FYGV, PVLG…ALLA, LVTR…FRGN, QLLV…LIPL, and VNIC…YLII.

This sequence belongs to the NRAMP family.

The protein localises to the cell membrane. In terms of biological role, h(+)-stimulated, divalent metal cation uptake system. The protein is Divalent metal cation transporter MntH of Staphylococcus haemolyticus (strain JCSC1435).